Consider the following 239-residue polypeptide: NAD(P)H-hydrate epimerase (239 aa).

In terms of domain architecture, YjeF N-terminal spans 14–220 (AAALDQELMS…EMAEQYNLDI (207 aa)). 64 to 68 (NNGGD) is a binding site for (6S)-NADPHX. The K(+) site is built by N65 and D126. (6S)-NADPHX-binding positions include 130–136 (GFSFSGE) and D159. S162 contributes to the K(+) binding site.

The protein belongs to the NnrE/AIBP family. The cofactor is K(+).

It is found in the cytoplasm. The protein resides in the mitochondrion. The catalysed reaction is (6R)-NADHX = (6S)-NADHX. It carries out the reaction (6R)-NADPHX = (6S)-NADPHX. Functionally, catalyzes the epimerization of the S- and R-forms of NAD(P)HX, a damaged form of NAD(P)H that is a result of enzymatic or heat-dependent hydration. This is a prerequisite for the S-specific NAD(P)H-hydrate dehydratase to allow the repair of both epimers of NAD(P)HX. The protein is NAD(P)H-hydrate epimerase of Phaeosphaeria nodorum (strain SN15 / ATCC MYA-4574 / FGSC 10173) (Glume blotch fungus).